A 70-amino-acid polypeptide reads, in one-letter code: Mu-agatoxin-Ao1a (70 aa).

A signal peptide spans 1–20; sequence MKAIIFFCFLSVMVFIVAEA. Positions 21–33 are excised as a propeptide; it reads SSLEALKIFEGER. 4 disulfides stabilise this stretch: Cys-35/Cys-50, Cys-42/Cys-55, Cys-49/Cys-65, and Cys-57/Cys-63. At Asn-69 the chain carries Asparagine amide.

The protein belongs to the neurotoxin 07 (Beta/delta-agtx) family. 04 (aga-5) subfamily. As to expression, expressed by the venom gland.

The protein localises to the secreted. In terms of biological role, insecticidal neurotoxin that modulates the insect Nav channel (DmNaV1/tipE (para/tipE)) in a unique manner, with both the activation and inactivation processes being affected. The voltage dependence of activation is shifted toward more hyperpolarized potentials (analogous to site 4 toxins) and a non-inactivating persistent sodium current is induced (site 3-like action). Interestingly, both effects take place in a voltage-dependent manner, producing a bell-shaped curve between -80 and 0 mV. This is Mu-agatoxin-Ao1a from Agelena orientalis (Funnel-web spider).